Consider the following 169-residue polypeptide: Vimentin-type intermediate filament-associated coiled-coil protein (169 aa).

The stretch at 7 to 89 (LQIREANAHL…VHSLQATVHQ (83 aa)) forms a coiled coil. Residues 126–135 (RLGPLPASDP) show a composition bias toward low complexity. Residues 126-169 (RLGPLPASDPGHPPPGGPGPPLDNSTGEEADRDHLQPAVFGTTV) are disordered. Residues 136-146 (GHPPPGGPGPP) are compositionally biased toward pro residues.

The protein localises to the cytoplasm. The protein is Vimentin-type intermediate filament-associated coiled-coil protein (VMAC) of Homo sapiens (Human).